Reading from the N-terminus, the 2124-residue chain is AMB antimetabolite synthetase AmbE (2124 aa).

Residues 456–847 (LRAALQPQAP…LGRIDEQVKI (392 aa)) form an adenylation region. A methyltransferase region spans residues 950–1147 (DVGANIGLFS…DLLRRHGFEV (198 aa)). Positions 1251-1325 (APANATEAAL…ELARLLAAPA (75 aa)) constitute a Carrier 1 domain. The residue at position 1286 (Ser-1286) is an O-(pantetheine 4'-phosphoryl)serine. The condensation stretch occupies residues 1359–1780 (DAYPMTSLQQ…ALLGDPVQPP (422 aa)). A Carrier 2 domain is found at 1785–1859 (AEDSVELRRV…EVVRRCHAAD (75 aa)). Ser-1819 carries the O-(pantetheine 4'-phosphoryl)serine modification. Positions 1886-2107 (RLIALPPAGG…AAEEVCAILR (222 aa)) are thioesterase.

The protein belongs to the NRP synthetase family. It depends on pantetheine 4'-phosphate as a cofactor.

It catalyses the reaction holo-[peptidyl-carrier protein] + L-glutamate + ATP = L-glutamyl-[peptidyl-carrier protein] + AMP + diphosphate. In terms of biological role, involved in the biosynthesis of the antimetabolite L-2-amino-4-methoxy-trans-3-butenoic acid (AMB), a non-proteinogenic amino acid which is toxic for prokaryotes and eukaryotes. Adenylates L-glutamate and loads it onto its first peptidyl carrier domain via a thioester linkage to the phosphopanthetheine moiety. The second peptidyl carrier domain is loaded with a L-alanine activated by AmbB. After formation by AmbB of the L-Glu-L-Ala dipeptide at the first carrier domain of AmbE, the condensation domain of AmbE probably condenses this dipeptide with the L-Ala residue attached at the second carrier domain of AmbE to give the L-Ala-L-Glu-L-Ala tripeptide. The central amino acid, L-Glu, would then undergo a series of modifications to be converted into AMB while the two flanking L-Ala residues remain in place. Finally, the L-Ala-AMB-L-Ala tripeptide is probably released by thioester cleavage via the thioester domain of AmbE. This chain is AMB antimetabolite synthetase AmbE, found in Pseudomonas aeruginosa (strain ATCC 15692 / DSM 22644 / CIP 104116 / JCM 14847 / LMG 12228 / 1C / PRS 101 / PAO1).